The chain runs to 1282 residues: MEAKDQKKHRKKNSGPKAAKKKKRLLQDLQLGDEEDARKRNPKAFAVQSAVRMARSFHRTQDLKTKKHHIPVVDRTPLEPPPIVVVVMGPPKVGKSTLIQCLIRNFTRQKLTEIRGPVTIVSGKKRRLTIIECGCDINMMIDLAKVADLVLMLIDASFGFEMETFEFLNICQVHGFPKIMGVLTHLDSFKHNKQLKKTKKRLKHRFWTEVYPGAKLFYLSGMVHGEYQNQEIHNLGRFITVMKFRPLTWQTSHPYILADRMEDLTNPEDIRTNIKCDRKVSLYGYLRGAHLKNKSQIHMPGVGDFAVSDISFLPDPCALPEQQKKRCLNEKEKLVYAPLSGVGGVLYDKDAVYVDLGGSHVFQDEVGPTHELVQSLISTHSTIDAKMASSRVTLFSDSKPLGSEDIDNQGLMMPKEEKQMDLNTGRMRRKAIFGDEDESGDSDDEEDDEMSEDDGLENGSSDEEAEEEENAEMTDQYMAVKGIKRRKLELEEDSEMDLPAFADSDDDLERSSAEEGEAEEADESSEEEDCTAGEKGISGSKAAGEGSKAGLSPANCQSDRVNLEKSLLMKKAALPTFDSGHCTAEEVFASEDESEESSSLSAEEEDSENEEAIRKKLSKPSQVSSGQKLGPQNFIDETSDIENLLKEEEDYKEENNDSKETSGALKWKEDLSRKAAEAFLRQQQAAPNLRKLIYGTVTEDNEEEDDDTLEELGGLFRVNQPDRECKHKADSLDCSRFLVEAPHDWDLEEVMNSIRDCFVTGKWEDDKDAAKVLAEDEELYGDFEDLETGDVHKGKSGPNTQNEDIEKEVKEEIDPDEEESAKKKHLDKKRKLKEMFDAEYDEGESTYFDDLKGEMQKQAQLNRAEFEDQDDEARVQYEGFRPGMYVRIEIENVPCEFVQNFDPHYPIILGGLGNSEGNVGYVQMRLKKHRWYKKILKSRDPIIFSVGWRRFQTIPLYYIEDHNGRQRLLKYTPQHMHCGAAFWGPITPQGTGFLAIQSVSGIMPDFRIAATGVVLDLDKSIKIVKKLKLTGFPYKIFKNTSFIKGMFNSALEVAKFEGAVIRTVSGIRGQIKKALRAPEGAFRASFEDKLLMSDIVFMRTWYPVSIPAFYNPVTSLLKPVGEKDTWSGMRTTGQLRLAHGVRLKANKDSLYKPILRQKKHFNSLHIPKALQKALPFKNKPKTQAKAGKVPKDRRRPAVIREPHERKILALLDALSTVHSQKMKKAKEQRHLHNKEHFRAKQKEEEEKLKRQKDLRKKLFRIQGQKERRNQKSSLKGAEGQLQ.

A compositionally biased stretch (basic residues) spans 1–24 (MEAKDQKKHRKKNSGPKAAKKKKR). A disordered region spans residues 1-43 (MEAKDQKKHRKKNSGPKAAKKKKRLLQDLQLGDEEDARKRNPK). Lys-43 is covalently cross-linked (Glycyl lysine isopeptide (Lys-Gly) (interchain with G-Cter in SUMO2)). The region spanning 80-245 (PPPIVVVVMG…GRFITVMKFR (166 aa)) is the Bms1-type G domain. Positions 89 to 96 (GPPKVGKS) are G1. Residue 89-96 (GPPKVGKS) participates in ATP binding. Residues 117–121 (PVTIV) are G2. The interval 132–135 (ECGC) is G3. Positions 184–187 (THLD) are G4. The residue at position 188 (Ser-188) is a Phosphoserine. The G5 stretch occupies residues 219–228 (LSGMVHGEYQ). Disordered regions lie at residues 397 to 557 (DSKP…ANCQ) and 575 to 667 (PTFD…ALKW). Residues Lys-399 and Lys-415 each participate in a glycyl lysine isopeptide (Lys-Gly) (interchain with G-Cter in SUMO2) cross-link. 2 stretches are compositionally biased toward acidic residues: residues 434 to 472 (GDEDESGDSDDEEDDEMSEDDGLENGSSDEEAEEEENAE) and 503 to 531 (DSDDDLERSSAEEGEAEEADESSEEEDCT). The span at 535–550 (KGISGSKAAGEGSKAG) shows a compositional bias: low complexity. Ser-552 is subject to Phosphoserine. Positions 588-610 (FASEDESEESSSLSAEEEDSENE) are enriched in acidic residues. Residues Ser-625 and Ser-639 each carry the phosphoserine modification. Residue Lys-646 forms a Glycyl lysine isopeptide (Lys-Gly) (interchain with G-Cter in SUMO2) linkage. The segment covering 653-667 (EENNDSKETSGALKW) has biased composition (basic and acidic residues). The residue at position 708 (Thr-708) is a Phosphothreonine. Disordered regions lie at residues 787–822 (ETGDVHKGKSGPNTQNEDIEKEVKEEIDPDEEESAK) and 1178–1202 (NKPKTQAKAGKVPKDRRRPAVIREP). Residue Lys-810 forms a Glycyl lysine isopeptide (Lys-Gly) (interchain with G-Cter in SUMO1); alternate linkage. Lys-810 participates in a covalent cross-link: Glycyl lysine isopeptide (Lys-Gly) (interchain with G-Cter in SUMO2); alternate. Lys-1206 participates in a covalent cross-link: Glycyl lysine isopeptide (Lys-Gly) (interchain with G-Cter in SUMO2). A disordered region spans residues 1219 to 1282 (SQKMKKAKEQ…SLKGAEGQLQ (64 aa)). Residues 1228-1248 (QRHLHNKEHFRAKQKEEEEKL) are compositionally biased toward basic and acidic residues. Basic residues predominate over residues 1249–1259 (KRQKDLRKKLF).

This sequence belongs to the TRAFAC class translation factor GTPase superfamily. Bms1-like GTPase family. BMS1 subfamily. As to quaternary structure, part of the small subunit (SSU) processome, composed of more than 70 proteins and the RNA chaperone small nucleolar RNA (snoRNA) U3. Interacts with RCL1.

The protein localises to the nucleus. It is found in the nucleolus. It catalyses the reaction GTP + H2O = GDP + phosphate + H(+). Functionally, GTPase required for the synthesis of 40S ribosomal subunits and for processing of pre-ribosomal RNA (pre-rRNA) at sites A0, A1, and A2. Controls access of pre-rRNA intermediates to RCL1 during ribosome biogenesis by binding RCL1 in a GTP-dependent manner, and delivering it to pre-ribosomes. GTP-binding and/or GTP hydrolysis may induce conformational rearrangements within the BMS1-RCL1 complex allowing the interaction of RCL1 with its RNA substrate. Required for RCL1 import into the nucleus. This Homo sapiens (Human) protein is Ribosome biogenesis protein BMS1 homolog.